A 311-amino-acid chain; its full sequence is Transcription factor MafB (311 aa).

2 disordered regions span residues 35–78 (PLGR…PTEQ) and 150–199 (EDLA…EDRF). The segment covering 54–76 (SVSSTPISTPCSSVPSSPSFSPT) has biased composition (low complexity). Residues 157–167 (HPHHHHHHHHQ) show a composition bias toward basic residues. Positions 168–194 (ASPTPSTSSSSSQQLQTSHQQHPPSSS) are enriched in low complexity. Residues 226-251 (RLKQKRRTLKNRGYAQSCRYKRVQQK) are basic motif. One can recognise a bZIP domain in the interval 226–289 (RLKQKRRTLK…DAYKLKCEKL (64 aa)). The leucine-zipper stretch occupies residues 254–275 (LENEKTQLIQQVEQLKQEVTRL).

This sequence belongs to the bZIP family. Maf subfamily. In terms of assembly, homodimer or heterodimer with other bHLH-Zip transcription factors. Binds DNA as a homodimer or heterodimer. Self-associates; the interaction requires the intact MAFB leucine-zipper domain. Interacts with FOS, HOXD12 and PRRX1. In terms of tissue distribution, expressed in brain, thymus, gut, lung, mesenterium, spleen, kidney, ovary and bursa.

Its subcellular location is the nucleus. Its function is as follows. Acts as a transcriptional activator or repressor. Positively regulates the expression of alpha-A crystallin genes during lens fiber cell differentiation. Binds to Maf recognition elements (MARE). The polypeptide is Transcription factor MafB (MAFB) (Gallus gallus (Chicken)).